A 557-amino-acid polypeptide reads, in one-letter code: Polypyrimidine tract-binding protein 1 (557 aa).

Met1 carries the N-acetylmethionine modification. Phosphoserine is present on Ser16. RRM domains are found at residues 59-143 (RVIH…SSPN), 184-260 (LRII…FSKL), and 363-437 (SVLL…LSKH). Residue Lys65 forms a Glycyl lysine isopeptide (Lys-Gly) (interchain with G-Cter in SUMO2) linkage. At Tyr127 the chain carries Phosphotyrosine. Position 138 is a phosphothreonine (Thr138). Ser141 carries the post-translational modification Phosphoserine. Residue Lys218 forms a Glycyl lysine isopeptide (Lys-Gly) (interchain with G-Cter in SUMO2) linkage. Residues 437-460 (HQSVQLPREGQEDQGLTKDYGNSP) form a disordered region. Position 459 is a phosphoserine (Ser459). One can recognise an RRM 4 domain in the interval 480–555 (ATLHLSNIPP…HHLRVSFSKS (76 aa)).

As to quaternary structure, monomer. Part of a ternary complex containing KHSRP, PTBP1, PTBP2 and HNRPH1. Interacts with RAVER1 and SFPQ.

It localises to the nucleus. Functionally, plays a role in pre-mRNA splicing and in the regulation of alternative splicing events. Activates exon skipping of its own pre-mRNA during muscle cell differentiation. Binds to the polypyrimidine tract of introns. May promote RNA looping when bound to two separate polypyrimidine tracts in the same pre-mRNA. May promote the binding of U2 snRNP to pre-mRNA. Cooperates with RAVER1 to modulate switching between mutually exclusive exons during maturation of the TPM1 pre-mRNA. Represses the splicing of MAPT/Tau exon 10. Binds to polypyrimidine-rich controlling element (PCE) of CFTR and promotes exon skipping of CFTR exon 9, thereby antagonizing TIA1 and its role in exon inclusion of CFTR exon 9. Plays a role in the splicing of pyruvate kinase PKM by binding repressively to a polypyrimidine tract flanking PKM exon 9, inhibiting exon 9 inclusion and resulting in exon 10 inclusion and production of the PKM M2 isoform. This Bos taurus (Bovine) protein is Polypyrimidine tract-binding protein 1 (PTBP1).